Consider the following 459-residue polypeptide: Bifunctional protein GlmU (459 aa).

The interval 1 to 230 (MSNRFAVILA…FDETLGVNDR (230 aa)) is pyrophosphorylase. UDP-N-acetyl-alpha-D-glucosamine contacts are provided by residues 9–12 (LAAG), lysine 23, glutamine 73, and 78–79 (GT). Aspartate 103 lines the Mg(2+) pocket. The UDP-N-acetyl-alpha-D-glucosamine site is built by glycine 140, glutamate 155, asparagine 170, and asparagine 228. Asparagine 228 contacts Mg(2+). The tract at residues 231–251 (VALSQAEIIMKNRINRKNMVN) is linker. Residues 252–459 (GVTIIDPSNT…VDQLLNKKKS (208 aa)) form an N-acetyltransferase region. UDP-N-acetyl-alpha-D-glucosamine contacts are provided by arginine 333 and lysine 351. Histidine 363 functions as the Proton acceptor in the catalytic mechanism. UDP-N-acetyl-alpha-D-glucosamine is bound by residues tyrosine 366 and asparagine 377. Residues 386–387 (NY), alanine 423, and arginine 440 each bind acetyl-CoA.

In the N-terminal section; belongs to the N-acetylglucosamine-1-phosphate uridyltransferase family. The protein in the C-terminal section; belongs to the transferase hexapeptide repeat family. In terms of assembly, homotrimer. Requires Mg(2+) as cofactor.

The protein localises to the cytoplasm. It carries out the reaction alpha-D-glucosamine 1-phosphate + acetyl-CoA = N-acetyl-alpha-D-glucosamine 1-phosphate + CoA + H(+). The catalysed reaction is N-acetyl-alpha-D-glucosamine 1-phosphate + UTP + H(+) = UDP-N-acetyl-alpha-D-glucosamine + diphosphate. It participates in nucleotide-sugar biosynthesis; UDP-N-acetyl-alpha-D-glucosamine biosynthesis; N-acetyl-alpha-D-glucosamine 1-phosphate from alpha-D-glucosamine 6-phosphate (route II): step 2/2. It functions in the pathway nucleotide-sugar biosynthesis; UDP-N-acetyl-alpha-D-glucosamine biosynthesis; UDP-N-acetyl-alpha-D-glucosamine from N-acetyl-alpha-D-glucosamine 1-phosphate: step 1/1. The protein operates within bacterial outer membrane biogenesis; LPS lipid A biosynthesis. Catalyzes the last two sequential reactions in the de novo biosynthetic pathway for UDP-N-acetylglucosamine (UDP-GlcNAc). The C-terminal domain catalyzes the transfer of acetyl group from acetyl coenzyme A to glucosamine-1-phosphate (GlcN-1-P) to produce N-acetylglucosamine-1-phosphate (GlcNAc-1-P), which is converted into UDP-GlcNAc by the transfer of uridine 5-monophosphate (from uridine 5-triphosphate), a reaction catalyzed by the N-terminal domain. This is Bifunctional protein GlmU from Bacillus cereus (strain G9842).